The sequence spans 215 residues: Dual specificity phosphatase 29 (215 aa).

In terms of domain architecture, Tyrosine-protein phosphatase spans 53 to 201 (HVNEVWPRLH…LRELDKQLVK (149 aa)). A substrate-binding site is contributed by 145-152 (HCAMGRSR). The active-site Phosphocysteine intermediate is the cysteine 146.

Belongs to the protein-tyrosine phosphatase family. Non-receptor class dual specificity subfamily. As to quaternary structure, homodimer. Interacts with PRKAA2.

Its subcellular location is the cytoplasm. It is found in the nucleus. The catalysed reaction is O-phospho-L-tyrosyl-[protein] + H2O = L-tyrosyl-[protein] + phosphate. It carries out the reaction O-phospho-L-seryl-[protein] + H2O = L-seryl-[protein] + phosphate. It catalyses the reaction O-phospho-L-threonyl-[protein] + H2O = L-threonyl-[protein] + phosphate. Its function is as follows. Dual specificity phosphatase able to dephosphorylate phosphotyrosine, phosphoserine and phosphothreonine residues within the same substrate, with a preference for phosphotyrosine as a substrate. Involved in the modulation of intracellular signaling cascades. In skeletal muscle regulates systemic glucose homeostasis by activating, AMPK, an energy sensor protein kinase. Affects MAP kinase signaling though modulation of the MAPK1/2 cascade in skeletal muscle promoting muscle cell differentiation, development and atrophy. The chain is Dual specificity phosphatase 29 (Dusp29) from Rattus norvegicus (Rat).